Reading from the N-terminus, the 264-residue chain is Indole-3-glycerol phosphate synthase (264 aa).

This sequence belongs to the TrpC family.

It catalyses the reaction 1-(2-carboxyphenylamino)-1-deoxy-D-ribulose 5-phosphate + H(+) = (1S,2R)-1-C-(indol-3-yl)glycerol 3-phosphate + CO2 + H2O. Its pathway is amino-acid biosynthesis; L-tryptophan biosynthesis; L-tryptophan from chorismate: step 4/5. In Xylella fastidiosa (strain M23), this protein is Indole-3-glycerol phosphate synthase.